Here is a 108-residue protein sequence, read N- to C-terminus: Urease subunit beta (108 aa).

This sequence belongs to the urease beta subunit family. As to quaternary structure, probable heterotrimer of UreA (gamma), UreB (beta) and UreC (alpha) subunits. Three heterotrimers associate to form the active enzyme. The trimeric urease interacts with an accessory complex composed of UreD, UreF and UreG, which is required for the assembly of the nickel containing metallocenter of UreC. The UreE protein may also play a direct role in nickel transfer to the urease apoprotein.

It is found in the cytoplasm. The catalysed reaction is urea + 2 H2O + H(+) = hydrogencarbonate + 2 NH4(+). It participates in nitrogen metabolism; urea degradation; CO(2) and NH(3) from urea (urease route): step 1/1. The protein is Urease subunit beta of Proteus mirabilis (strain HI4320).